We begin with the raw amino-acid sequence, 413 residues long: Histidine--tRNA ligase (413 aa).

This sequence belongs to the class-II aminoacyl-tRNA synthetase family. Homodimer.

The protein localises to the cytoplasm. The catalysed reaction is tRNA(His) + L-histidine + ATP = L-histidyl-tRNA(His) + AMP + diphosphate + H(+). This chain is Histidine--tRNA ligase, found in Ehrlichia canis (strain Jake).